Consider the following 79-residue polypeptide: Small cysteine-rich protein 2 (79 aa).

An N-terminal signal peptide occupies residues 1–21 (MRSQHVLILLLGLVCASQVLG). Positions 22–35 (KHLTKVKAKALHYD) are excised as a propeptide.

The protein belongs to the Cnidaria small cysteine-rich protein (SCRiP) family. delta subfamily. Contains 4 disulfide bonds.

It is found in the secreted. It localises to the nematocyst. Its function is as follows. This recombinant protein induces severe neurotoxicity on zebrafish larvae (Danio rerio) at a concentration of 230 mg/ml, but does not show toxicity when injected in blowfly larvae (Sarcophaga falculata). All fish incubated with this protein died within 200 minutes of exposure. Has also been claimed to be implied in calcification, but this function seems improbable. In Acropora millepora (Staghorn coral), this protein is Small cysteine-rich protein 2.